A 526-amino-acid polypeptide reads, in one-letter code: Sterol 14-alpha demethylase CYP51A (526 aa).

The chain crosses the membrane as a helical span at residues 27 to 47 (IGFAVFLVLSVVLNVLNQLLF). Tyrosine 123 contacts lanosterol. Cysteine 470 serves as a coordination point for heme.

It belongs to the cytochrome P450 family. The cofactor is heme.

It localises to the endoplasmic reticulum membrane. It catalyses the reaction a 14alpha-methyl steroid + 3 reduced [NADPH--hemoprotein reductase] + 3 O2 = a Delta(14) steroid + formate + 3 oxidized [NADPH--hemoprotein reductase] + 4 H2O + 4 H(+). The catalysed reaction is a 14alpha-methyl steroid + reduced [NADPH--hemoprotein reductase] + O2 = a 14alpha-hydroxymethyl steroid + oxidized [NADPH--hemoprotein reductase] + H2O + H(+). It carries out the reaction a 14alpha-hydroxymethyl steroid + reduced [NADPH--hemoprotein reductase] + O2 = a 14alpha-formyl steroid + oxidized [NADPH--hemoprotein reductase] + 2 H2O + H(+). The enzyme catalyses a 14alpha-formyl steroid + reduced [NADPH--hemoprotein reductase] + O2 = a Delta(14) steroid + formate + oxidized [NADPH--hemoprotein reductase] + H2O + 2 H(+). It catalyses the reaction lanosterol + 3 reduced [NADPH--hemoprotein reductase] + 3 O2 = 4,4-dimethyl-5alpha-cholesta-8,14,24-trien-3beta-ol + formate + 3 oxidized [NADPH--hemoprotein reductase] + 4 H2O + 4 H(+). The catalysed reaction is lanosterol + reduced [NADPH--hemoprotein reductase] + O2 = 32-hydroxylanosterol + oxidized [NADPH--hemoprotein reductase] + H2O + H(+). It carries out the reaction 32-hydroxylanosterol + reduced [NADPH--hemoprotein reductase] + O2 = 32-oxolanosterol + oxidized [NADPH--hemoprotein reductase] + 2 H2O + H(+). The enzyme catalyses 32-oxolanosterol + reduced [NADPH--hemoprotein reductase] + O2 = 4,4-dimethyl-5alpha-cholesta-8,14,24-trien-3beta-ol + formate + oxidized [NADPH--hemoprotein reductase] + H2O + 2 H(+). It catalyses the reaction eburicol + 3 reduced [NADPH--hemoprotein reductase] + 3 O2 = 14-demethyleburicol + formate + 3 oxidized [NADPH--hemoprotein reductase] + 4 H2O + 4 H(+). The catalysed reaction is eburicol + reduced [NADPH--hemoprotein reductase] + O2 = 32-hydroxyeburicol + oxidized [NADPH--hemoprotein reductase] + H2O + H(+). It carries out the reaction 32-hydroxyeburicol + reduced [NADPH--hemoprotein reductase] + O2 = 32-oxoeburicol + oxidized [NADPH--hemoprotein reductase] + 2 H2O + H(+). The enzyme catalyses 32-oxoeburicol + reduced [NADPH--hemoprotein reductase] + O2 = 14-demethyleburicol + formate + oxidized [NADPH--hemoprotein reductase] + H2O + 2 H(+). It participates in steroid metabolism; ergosterol biosynthesis. In terms of biological role, together with cyp51A and cyp51C, encodes the sterol 14alpha-demethylase that plays a critical role in the third module of ergosterol biosynthesis pathway, being ergosterol the major sterol component in fungal membranes that participates in a variety of functions. Essential for ascospore production. The third module or late pathway involves the ergosterol synthesis itself through consecutive reactions that mainly occur in the endoplasmic reticulum (ER) membrane. In filamentous fungi, during the initial step of this module, lanosterol (lanosta-8,24-dien-3beta-ol) can be metabolized to eburicol. Sterol 14alpha-demethylase catalyzes the three-step oxidative removal of the 14alpha-methyl group (C-32) of both these sterols in the form of formate, and converts eburicol and lanosterol to 14-demethyleburicol (4,4,24-trimethylergosta-8,14,24(28)-trienol) and 4,4-dimethyl-5alpha-cholesta-8,14,24-trien-3beta-ol, respectively, which are further metabolized by other enzymes in the pathway to ergosterol. Can also use substrates not intrinsic to fungi, such as 24,25-dihydrolanosterol (DHL), producing 4,4'-dimethyl-8,14-cholestadien-3-beta-ol, but at lower rates than the endogenous substrates. The protein is Sterol 14-alpha demethylase CYP51A of Gibberella zeae (strain ATCC MYA-4620 / CBS 123657 / FGSC 9075 / NRRL 31084 / PH-1) (Wheat head blight fungus).